Consider the following 1250-residue polypeptide: Myosin-1 (1250 aa).

The disordered stretch occupies residues M1–F43. One can recognise a Myosin motor domain in the interval I51–D730. G144–T151 is a binding site for ATP. Phosphoserine is present on S372. Positions S419 to A501 are actin-binding. IQ domains lie at H734–C754 and A755–Q780. Residues R788–A978 enclose the TH1 domain. Disordered stretches follow at residues D962–P1079 and W1126–W1250. A compositionally biased stretch (pro residues) spans A1021 to P1035. Low complexity predominate over residues Q1036 to A1051. Pro residues-rich tracts occupy residues A1064–K1077 and T1139–A1151. An SH3 domain is found at P1076 to A1137. Positions P1152–K1170 are enriched in low complexity. A compositionally biased stretch (polar residues) spans V1201–N1222. The segment covering A1223–A1232 has biased composition (low complexity).

Belongs to the TRAFAC class myosin-kinesin ATPase superfamily. Myosin family. Post-translationally, phosphorylation of the TEDS site (Ser-372) is required for the polarization of the actin cytoskeleton. Phosphorylation probably activates the myosin-I ATPase activity.

The protein resides in the cytoplasm. It is found in the cytoskeleton. The protein localises to the actin patch. Type-I myosin implicated in the organization of the actin cytoskeleton. Required for proper actin cytoskeleton polarization. At the cell cortex, assembles in patch-like structures together with proteins from the actin-polymerizing machinery and promotes actin assembly. Functions as actin nucleation-promoting factor (NPF) for the Arp2/3 complex. Plays an important role in polarized growth, spore germination, hyphal morphogenesis, and septal wall formation. This chain is Myosin-1 (myoA), found in Neosartorya fischeri (strain ATCC 1020 / DSM 3700 / CBS 544.65 / FGSC A1164 / JCM 1740 / NRRL 181 / WB 181) (Aspergillus fischerianus).